The chain runs to 309 residues: tRNA dimethylallyltransferase (309 aa).

ATP is bound at residue 9 to 16; sequence GPTAIGKT. Substrate is bound at residue 11–16; sequence TAIGKT. Interaction with substrate tRNA regions lie at residues 34–37 and 164–168; these read DSRQ and QRMMR.

This sequence belongs to the IPP transferase family. Monomer. Mg(2+) serves as cofactor.

The catalysed reaction is adenosine(37) in tRNA + dimethylallyl diphosphate = N(6)-dimethylallyladenosine(37) in tRNA + diphosphate. In terms of biological role, catalyzes the transfer of a dimethylallyl group onto the adenine at position 37 in tRNAs that read codons beginning with uridine, leading to the formation of N6-(dimethylallyl)adenosine (i(6)A). This chain is tRNA dimethylallyltransferase, found in Flavobacterium johnsoniae (strain ATCC 17061 / DSM 2064 / JCM 8514 / BCRC 14874 / CCUG 350202 / NBRC 14942 / NCIMB 11054 / UW101) (Cytophaga johnsonae).